The primary structure comprises 109 residues: Toxin YpjF (109 aa).

This sequence belongs to the CbtA/YkfI/YpjF toxin family. As to quaternary structure, interacts with FtsZ but not MreB. Another group finds interaction with FtsZ and MreB.

Functionally, toxic component of a type IV toxin-antitoxin (TA) system. Acts as a dual toxin inhibitor that blocks cell division and cell elongation in genetically separable interactions with FtsZ and MreB. Overexpression results in inhibition of growth in liquid cultures. Overexpression leads to formation of lemon-shaped cells; inactivated by overexpression of cognate antitoxin YfjZ but not when the 2 genes are coexpressed from the same plasmid. Also neutralized by overexpression of non-cognate antitoxins YafW and CbeA. The sequence is that of Toxin YpjF (ypjF) from Escherichia coli (strain K12).